The chain runs to 180 residues: Large ribosomal subunit protein uL6 (180 aa).

This sequence belongs to the universal ribosomal protein uL6 family. As to quaternary structure, part of the 50S ribosomal subunit.

This protein binds to the 23S rRNA, and is important in its secondary structure. It is located near the subunit interface in the base of the L7/L12 stalk, and near the tRNA binding site of the peptidyltransferase center. The chain is Large ribosomal subunit protein uL6 from Borrelia hermsii (strain HS1 / DAH).